The following is a 315-amino-acid chain: MHREPPKKKAEKRLFDASSFGKDLLAGGVAAAVSKTAVAPIERVKLLLQVQASSKQISPEARYKGMVDCLVRIPREQGFFSFWRGNLANVIRYFPTQALNFAFKDKYKQLFMSGVNKEKQFWRWFLANLASGGAAGATSLCVVYPLDFARTRLGVDIGKGPEERQFKGLGDCIMKIAKSDGIAGLYQGFGVSVQGIIVYRASYFGAYDTVKGLLPKPKKTPFLVSFFIAQVVTTCSGILSYPFDTVRRRMMMQSGEAKRQYKGTLDCFVKIYQHEGINSFFRGAFSNVLRGTGGALVLVLYDKIKEFFHIDIGGR.

The Mitochondrial intermembrane portion of the chain corresponds to 1–19; sequence MHREPPKKKAEKRLFDASS. A Solcar 1 repeat occupies 18 to 110; the sequence is SSFGKDLLAG…FAFKDKYKQL (93 aa). The helical transmembrane segment at 20-49 threads the bilayer; sequence FGKDLLAGGVAAAVSKTAVAPIERVKLLLQ. Residues 50-86 lie on the Mitochondrial matrix side of the membrane; that stretch reads VQASSKQISPEARYKGMVDCLVRIPREQGFFSFWRGN. Residues 87-111 traverse the membrane as a helical segment; sequence LANVIRYFPTQALNFAFKDKYKQLF. 2 residues coordinate ADP: Arg92 and Lys104. Residues 112–121 are Mitochondrial intermembrane-facing; it reads MSGVNKEKQF. The chain crosses the membrane as a helical span at residues 122–142; it reads WRWFLANLASGGAAGATSLCV. 2 Solcar repeats span residues 123 to 213 and 220 to 307; these read RWFL…VKGL and TPFL…IKEF. Residues 143-190 lie on the Mitochondrial matrix side of the membrane; that stretch reads VYPLDFARTRLGVDIGKGPEERQFKGLGDCIMKIAKSDGIAGLYQGFG. Residues 191–211 traverse the membrane as a helical segment; it reads VSVQGIIVYRASYFGAYDTVK. The Mitochondrial intermembrane segment spans residues 212–222; the sequence is GLLPKPKKTPF. Residues 223–243 form a helical membrane-spanning segment; that stretch reads LVSFFIAQVVTTCSGILSYPF. At 244 to 283 the chain is on the mitochondrial matrix side; sequence DTVRRRMMMQSGEAKRQYKGTLDCFVKIYQHEGINSFFRG. Arg247 contacts ADP. Residues 247 to 252 form an important for transport activity region; it reads RRRMMM. Positions 247 to 252 match the Nucleotide carrier signature motif motif; sequence RRRMMM. Residues 284–301 form a helical membrane-spanning segment; it reads AFSNVLRGTGGALVLVLY. Over 302–315 the chain is Mitochondrial intermembrane; sequence DKIKEFFHIDIGGR.

Belongs to the mitochondrial carrier (TC 2.A.29) family. Monomer.

It is found in the mitochondrion inner membrane. Its subcellular location is the membrane. It localises to the cell projection. The protein resides in the cilium. The protein localises to the flagellum membrane. It catalyses the reaction ADP(in) + ATP(out) = ADP(out) + ATP(in). It carries out the reaction dATP(out) + ADP(in) = dATP(in) + ADP(out). The catalysed reaction is dADP(in) + ADP(out) = dADP(out) + ADP(in). The enzyme catalyses H(+)(in) = H(+)(out). Its activity is regulated as follows. The matrix-open state (m-state) is inhibited by the membrane-permeable bongkrekic acid (BKA). The cytoplasmic-open state (c-state) is inhibited by the membrane-impermeable toxic inhibitor carboxyatractyloside (CATR). Proton transporter activity is inhibited by ADP:ATP antiporter activity. Its function is as follows. ADP:ATP antiporter that mediates import of ADP into the mitochondrial matrix for ATP synthesis, and export of ATP out to fuel the cell. Cycles between the cytoplasmic-open state (c-state) and the matrix-open state (m-state): operates by the alternating access mechanism with a single substrate-binding site intermittently exposed to either the cytosolic (c-state) or matrix (m-state) side of the inner mitochondrial membrane. Specifically required during spermatogenesis, probably to mediate ADP:ATP exchange in spermatocytes. Large ATP supplies from mitochondria may be critical for normal progression of spermatogenesis during early stages of meiotic prophase I, including DNA double-strand break repair and chromosomal synapsis. In addition to its ADP:ATP antiporter activity, also involved in mitochondrial uncoupling and mitochondrial permeability transition pore (mPTP) activity. Plays a role in mitochondrial uncoupling by acting as a proton transporter: proton transport uncouples the proton flows via the electron transport chain and ATP synthase to reduce the efficiency of ATP production and cause mitochondrial thermogenesis. Proton transporter activity is inhibited by ADP:ATP antiporter activity, suggesting that SLC25A31/ANT4 acts as a master regulator of mitochondrial energy output by maintaining a delicate balance between ATP production (ADP:ATP antiporter activity) and thermogenesis (proton transporter activity). Proton transporter activity requires free fatty acids as cofactor, but does not transport it. Among nucleotides, may also exchange ADP for dATP and dADP. Also plays a key role in mPTP opening, a non-specific pore that enables free passage of the mitochondrial membranes to solutes of up to 1.5 kDa, and which contributes to cell death. It is however unclear if SLC25A31/ANT4 constitutes a pore-forming component of mPTP or regulates it. The chain is ADP/ATP translocase 4 from Macaca fascicularis (Crab-eating macaque).